The primary structure comprises 169 residues: ATP synthase subunit b (169 aa).

Residues 11–31 (IPSFIAQIVNFGLLLGLLYLF) form a helical membrane-spanning segment.

Belongs to the ATPase B chain family. As to quaternary structure, F-type ATPases have 2 components, F(1) - the catalytic core - and F(0) - the membrane proton channel. F(1) has five subunits: alpha(3), beta(3), gamma(1), delta(1), epsilon(1). F(0) has three main subunits: a(1), b(2) and c(10-14). The alpha and beta chains form an alternating ring which encloses part of the gamma chain. F(1) is attached to F(0) by a central stalk formed by the gamma and epsilon chains, while a peripheral stalk is formed by the delta and b chains.

It localises to the cell membrane. Its function is as follows. F(1)F(0) ATP synthase produces ATP from ADP in the presence of a proton or sodium gradient. F-type ATPases consist of two structural domains, F(1) containing the extramembraneous catalytic core and F(0) containing the membrane proton channel, linked together by a central stalk and a peripheral stalk. During catalysis, ATP synthesis in the catalytic domain of F(1) is coupled via a rotary mechanism of the central stalk subunits to proton translocation. Functionally, component of the F(0) channel, it forms part of the peripheral stalk, linking F(1) to F(0). This chain is ATP synthase subunit b, found in Dehalococcoides mccartyi (strain ATCC BAA-2100 / JCM 16839 / KCTC 5957 / BAV1).